The primary structure comprises 226 residues: PDGF-related-transforming protein sis (226 aa).

Positions 201–215 (RRPPKGKHRKCKHTH) are enriched in basic residues. Residues 201 to 226 (RRPPKGKHRKCKHTHDKTALKETLGA) form a disordered region.

This sequence belongs to the PDGF/VEGF growth factor family.

The polypeptide is PDGF-related-transforming protein sis (V-SIS) (Woolly monkey sarcoma virus (WMSV)).